A 136-amino-acid chain; its full sequence is MSYAIIETGGKQLKVQPGRFYDIELLHVDPETSHTIDKVLLVSHDNEVTVGQPFVEGATVEGTILRHFRGRKVIVYKMRPKKKTRKKRGHRQEITRFMVNAINFNGQVIGATENGTTTPTTANVEVATTEGSDSEE.

This sequence belongs to the bacterial ribosomal protein bL21 family. Part of the 50S ribosomal subunit. Contacts protein L20.

Its function is as follows. This protein binds to 23S rRNA in the presence of protein L20. The chain is Large ribosomal subunit protein bL21 from Gloeothece citriformis (strain PCC 7424) (Cyanothece sp. (strain PCC 7424)).